Here is a 411-residue protein sequence, read N- to C-terminus: Multifunctional CCA protein (411 aa).

2 residues coordinate ATP: glycine 8 and arginine 11. Glycine 8 and arginine 11 together coordinate CTP. 2 residues coordinate Mg(2+): aspartate 21 and aspartate 23. The ATP site is built by arginine 91, arginine 143, and arginine 146. Residues arginine 91, arginine 143, and arginine 146 each coordinate CTP. One can recognise an HD domain in the interval 232-333; the sequence is TGVHVMMVID…MRLLERCDAL (102 aa).

This sequence belongs to the tRNA nucleotidyltransferase/poly(A) polymerase family. Bacterial CCA-adding enzyme type 1 subfamily. As to quaternary structure, monomer. Can also form homodimers and oligomers. The cofactor is Mg(2+). Ni(2+) serves as cofactor.

The enzyme catalyses a tRNA precursor + 2 CTP + ATP = a tRNA with a 3' CCA end + 3 diphosphate. It carries out the reaction a tRNA with a 3' CCA end + 2 CTP + ATP = a tRNA with a 3' CCACCA end + 3 diphosphate. Catalyzes the addition and repair of the essential 3'-terminal CCA sequence in tRNAs without using a nucleic acid template. Adds these three nucleotides in the order of C, C, and A to the tRNA nucleotide-73, using CTP and ATP as substrates and producing inorganic pyrophosphate. tRNA 3'-terminal CCA addition is required both for tRNA processing and repair. Also involved in tRNA surveillance by mediating tandem CCA addition to generate a CCACCA at the 3' terminus of unstable tRNAs. While stable tRNAs receive only 3'-terminal CCA, unstable tRNAs are marked with CCACCA and rapidly degraded. The sequence is that of Multifunctional CCA protein from Cupriavidus necator (strain ATCC 17699 / DSM 428 / KCTC 22496 / NCIMB 10442 / H16 / Stanier 337) (Ralstonia eutropha).